The following is a 280-amino-acid chain: Release factor glutamine methyltransferase (280 aa).

Residues 120–124 (GTGSG), D143, and N186 each bind S-adenosyl-L-methionine. 186–189 (NPPY) contacts substrate.

This sequence belongs to the protein N5-glutamine methyltransferase family. PrmC subfamily.

It catalyses the reaction L-glutaminyl-[peptide chain release factor] + S-adenosyl-L-methionine = N(5)-methyl-L-glutaminyl-[peptide chain release factor] + S-adenosyl-L-homocysteine + H(+). In terms of biological role, methylates the class 1 translation termination release factors RF1/PrfA and RF2/PrfB on the glutamine residue of the universally conserved GGQ motif. The sequence is that of Release factor glutamine methyltransferase from Koribacter versatilis (strain Ellin345).